The primary structure comprises 384 residues: 23S rRNA (uracil(747)-C(5))-methyltransferase RlmC (384 aa).

[4Fe-4S] cluster contacts are provided by cysteine 3, cysteine 11, cysteine 14, and cysteine 87. S-adenosyl-L-methionine is bound by residues glutamine 212, phenylalanine 241, glutamate 262, and asparagine 309. Cysteine 336 (nucleophile) is an active-site residue.

Belongs to the class I-like SAM-binding methyltransferase superfamily. RNA M5U methyltransferase family. RlmC subfamily.

It carries out the reaction uridine(747) in 23S rRNA + S-adenosyl-L-methionine = 5-methyluridine(747) in 23S rRNA + S-adenosyl-L-homocysteine + H(+). Functionally, catalyzes the formation of 5-methyl-uridine at position 747 (m5U747) in 23S rRNA. The polypeptide is 23S rRNA (uracil(747)-C(5))-methyltransferase RlmC (Shewanella amazonensis (strain ATCC BAA-1098 / SB2B)).